A 156-amino-acid polypeptide reads, in one-letter code: Snaclec A5 (156 aa).

The first 23 residues, 1 to 23 (MGRSISVSFGLLVVFLSLSGTGA), serve as a signal peptide directing secretion. Intrachain disulfides connect Cys-27–Cys-38, Cys-55–Cys-154, and Cys-129–Cys-146. The C-type lectin domain occupies 34-155 (HEGHCYKVFN…CGKPYRFTCE (122 aa)).

This sequence belongs to the snaclec family. As to quaternary structure, heterodimer; disulfide-linked. Expressed by the venom gland.

It is found in the secreted. Its function is as follows. Interferes with one step of hemostasis (modulation of platelet aggregation, or coagulation cascade, for example). The sequence is that of Snaclec A5 from Macrovipera lebetinus (Levantine viper).